A 448-amino-acid polypeptide reads, in one-letter code: Probable glycine dehydrogenase (decarboxylating) subunit 1 (448 aa).

Belongs to the GcvP family. N-terminal subunit subfamily. As to quaternary structure, the glycine cleavage system is composed of four proteins: P, T, L and H. In this organism, the P 'protein' is a heterodimer of two subunits.

It carries out the reaction N(6)-[(R)-lipoyl]-L-lysyl-[glycine-cleavage complex H protein] + glycine + H(+) = N(6)-[(R)-S(8)-aminomethyldihydrolipoyl]-L-lysyl-[glycine-cleavage complex H protein] + CO2. Its function is as follows. The glycine cleavage system catalyzes the degradation of glycine. The P protein binds the alpha-amino group of glycine through its pyridoxal phosphate cofactor; CO(2) is released and the remaining methylamine moiety is then transferred to the lipoamide cofactor of the H protein. The protein is Probable glycine dehydrogenase (decarboxylating) subunit 1 of Listeria monocytogenes serovar 1/2a (strain ATCC BAA-679 / EGD-e).